Consider the following 412-residue polypeptide: Serine hydroxymethyltransferase (412 aa).

Residues Leu116 and 120–122 (GHL) each bind (6S)-5,6,7,8-tetrahydrofolate. The residue at position 225 (Lys225) is an N6-(pyridoxal phosphate)lysine. (6S)-5,6,7,8-tetrahydrofolate-binding positions include Glu241 and 350-352 (SPF).

It belongs to the SHMT family. As to quaternary structure, homodimer. The cofactor is pyridoxal 5'-phosphate.

Its subcellular location is the cytoplasm. The enzyme catalyses (6R)-5,10-methylene-5,6,7,8-tetrahydrofolate + glycine + H2O = (6S)-5,6,7,8-tetrahydrofolate + L-serine. The protein operates within one-carbon metabolism; tetrahydrofolate interconversion. It participates in amino-acid biosynthesis; glycine biosynthesis; glycine from L-serine: step 1/1. Catalyzes the reversible interconversion of serine and glycine with tetrahydrofolate (THF) serving as the one-carbon carrier. This reaction serves as the major source of one-carbon groups required for the biosynthesis of purines, thymidylate, methionine, and other important biomolecules. Also exhibits THF-independent aldolase activity toward beta-hydroxyamino acids, producing glycine and aldehydes, via a retro-aldol mechanism. The sequence is that of Serine hydroxymethyltransferase from Enterococcus faecalis (strain ATCC 700802 / V583).